A 430-amino-acid chain; its full sequence is Solanesyl-diphosphate synthase 1, mitochondrial (430 aa).

A mitochondrion-targeting transit peptide spans 1–31 (MSWRWALARRVAALGATSGGGDGATAQAQRL). Isopentenyl diphosphate-binding residues include Lys133, Arg136, and His182. Mg(2+) is bound by residues Asp189 and Asp193. Arg198 contributes to the an all-trans-polyprenyl diphosphate binding site. Arg199 provides a ligand contact to isopentenyl diphosphate. Residues Lys275, Thr276, Gln313, and Lys330 each contribute to the an all-trans-polyprenyl diphosphate site.

It belongs to the FPP/GGPP synthase family. In terms of assembly, homodimer. Mg(2+) serves as cofactor. In terms of tissue distribution, expressed in leaves, stems and roots. Highest expression in roots.

Its subcellular location is the mitochondrion. The catalysed reaction is 7 isopentenyl diphosphate + (2E)-geranyl diphosphate = all-trans-nonaprenyl diphosphate + 7 diphosphate. It participates in cofactor biosynthesis; ubiquinone biosynthesis. Functionally, involved in the supply of solanesyl diphosphate for ubiquinone-9 (UQ-9) biosynthesis in mitochondria. Farnesyl diphosphate is the preferred substrate. The chain is Solanesyl-diphosphate synthase 1, mitochondrial from Oryza sativa subsp. japonica (Rice).